Consider the following 275-residue polypeptide: Undecaprenyl-diphosphatase (275 aa).

The next 8 membrane-spanning stretches (helical) occupy residues 1–21 (MDWV…FLPI), 42–62 (VKDA…LVYY), 80–100 (TLWT…LAFG), 107–127 (LFKP…MWLI), 147–167 (SLLI…SRSA), 184–204 (TKFS…LNLV), 214–234 (IGLL…YLAI), and 249–269 (FAVY…TGVM).

It belongs to the UppP family.

The protein localises to the cell membrane. The catalysed reaction is di-trans,octa-cis-undecaprenyl diphosphate + H2O = di-trans,octa-cis-undecaprenyl phosphate + phosphate + H(+). Functionally, catalyzes the dephosphorylation of undecaprenyl diphosphate (UPP). Confers resistance to bacitracin. The sequence is that of Undecaprenyl-diphosphatase from Deinococcus deserti (strain DSM 17065 / CIP 109153 / LMG 22923 / VCD115).